A 210-amino-acid polypeptide reads, in one-letter code: Somatotropin (210 aa).

The signal sequence occupies residues 1 to 23; that stretch reads MARALVLLSVVLVSLLVNQGTAS. Residue histidine 38 participates in Zn(2+) binding. Cysteine 71 and cysteine 183 are disulfide-bonded. Glutamate 192 is a Zn(2+) binding site. A disulfide bond links cysteine 200 and cysteine 208.

The protein belongs to the somatotropin/prolactin family.

The protein localises to the secreted. In terms of biological role, growth hormone plays an important role in growth control. The protein is Somatotropin (gh) of Ctenopharyngodon idella (Grass carp).